The primary structure comprises 163 residues: Phosphopantetheine adenylyltransferase (163 aa).

Substrate is bound at residue S8. Residues 8–9 and H16 each bind ATP; that span reads SF. K40, T72, and R86 together coordinate substrate. Residues 87–89, E97, and 122–128 contribute to the ATP site; these read GLR and HSFLSSS.

Belongs to the bacterial CoaD family. In terms of assembly, homohexamer. Mg(2+) serves as cofactor.

Its subcellular location is the cytoplasm. It carries out the reaction (R)-4'-phosphopantetheine + ATP + H(+) = 3'-dephospho-CoA + diphosphate. It participates in cofactor biosynthesis; coenzyme A biosynthesis; CoA from (R)-pantothenate: step 4/5. Functionally, reversibly transfers an adenylyl group from ATP to 4'-phosphopantetheine, yielding dephospho-CoA (dPCoA) and pyrophosphate. This is Phosphopantetheine adenylyltransferase from Parasynechococcus marenigrum (strain WH8102).